Consider the following 768-residue polypeptide: C-type polyheme cytochrome OmcC (768 aa).

Positions 1–23 are cleaved as a signal peptide; sequence MSRKVTKYSAVLAVSLFAAALAG. A lipid anchor (N-palmitoyl cysteine) is attached at cysteine 24. Cysteine 24 is lipidated: S-diacylglycerol cysteine. Heme c-binding residues include cysteine 48, cysteine 51, histidine 52, cysteine 80, cysteine 83, histidine 84, cysteine 112, cysteine 115, histidine 116, cysteine 148, cysteine 151, histidine 152, cysteine 193, cysteine 196, histidine 197, cysteine 238, cysteine 241, histidine 242, cysteine 320, cysteine 323, histidine 324, cysteine 405, cysteine 408, histidine 409, cysteine 454, cysteine 457, histidine 458, cysteine 504, cysteine 507, histidine 508, cysteine 579, cysteine 582, histidine 583, cysteine 611, cysteine 614, and histidine 615.

Binds 12 heme c groups per subunit.

Its subcellular location is the cell outer membrane. In terms of biological role, not involved in Fe(3+) reduction. This Geobacter sulfurreducens (strain ATCC 51573 / DSM 12127 / PCA) protein is C-type polyheme cytochrome OmcC (omcC).